The chain runs to 593 residues: Replication protein E1 (593 aa).

A Nuclear localization signal motif is present at residues 72–74 (KRK). Positions 86–95 (LSPRLSAVHI) match the Nuclear export signal motif. Position 87 is a phosphoserine; by host (serine 87). A DNA-binding region region spans residues 134 to 297 (NQNGAECELN…TIVEHQLASA (164 aa)). Residues 382–546 (EEWKEIVQFL…LPMSDKDEPL (165 aa)) enclose the SF3 helicase domain. Residue 422–429 (GPPDTGKS) participates in ATP binding. Residue lysine 503 forms a Glycyl lysine isopeptide (Lys-Gly) (interchain with G-Cter in SUMO) linkage.

Belongs to the papillomaviridae E1 protein family. Can form hexamers. Interacts with E2 protein; this interaction increases E1 DNA binding specificity. Interacts with host DNA polymerase subunit POLA2. Interacts with host single stranded DNA-binding protein RPA1. Interacts with host TOP1; this interaction stimulates the enzymatic activity of TOP1. Post-translationally, phosphorylated. Sumoylated.

It localises to the host nucleus. It carries out the reaction Couples ATP hydrolysis with the unwinding of duplex DNA by translocating in the 3'-5' direction.. The catalysed reaction is ATP + H2O = ADP + phosphate + H(+). ATP-dependent DNA 3'-5' helicase required for initiation of viral DNA replication. It forms a complex with the viral E2 protein. The E1-E2 complex binds to the replication origin which contains binding sites for both proteins. During the initial step, a dimer of E1 interacts with a dimer of protein E2 leading to a complex that binds the viral origin of replication with high specificity. Then, a second dimer of E1 displaces the E2 dimer in an ATP-dependent manner to form the E1 tetramer. Following this, two E1 monomers are added to each half of the site, which results in the formation of two E1 trimers on the viral ori. Subsequently, two hexamers will be created. The double hexamer acts as a bi-directional helicase machinery and unwinds the viral DNA and then recruits the host DNA polymerase to start replication. The protein is Replication protein E1 of Human papillomavirus type 48.